The sequence spans 1937 residues: Myosin-2 (1937 aa).

Positions 33–82 constitute a Myosin N-terminal SH3-like domain; the sequence is DAKTSVFVAEPKESFVKGTIQSREGGKVTVKTDAGATLTVKEDQVFPMNP. 2 positions are modified to phosphothreonine: T64 and T69. The Myosin motor domain occupies 86-780; sequence DKIEDMAMMT…LLGLLEEMRD (695 aa). K130 is modified (N6,N6,N6-trimethyllysine). 179 to 186 lines the ATP pocket; sequence GESGAGKT. Y387 carries the phosphotyrosine modification. T417 carries the post-translational modification Phosphothreonine. A Phosphoserine modification is found at S623. Residues 657–679 form an actin-binding region; sequence LNKLMTNLRSTHPHFVRCIIPNE. H755 is modified (pros-methylhistidine). The segment at 759–773 is actin-binding; that stretch reads KFGHTKVFFKAGLLG. Positions 783–812 constitute an IQ domain; the sequence is LAQIITRTQARCRGFLARVEYQKMVERRES. Residues 841–1937 are a coiled coil; sequence LLKSAETEKE…EVHTKIISEE (1097 aa). S1094 carries the phosphoserine modification. Disordered stretches follow at residues 1124–1145 and 1151–1170; these read IEAE…SREL and RLEE…KKRE. Over residues 1126-1145 the composition is skewed to basic and acidic residues; sequence AERASRAKAEKQRSDLSREL. Phosphoserine is present on residues S1160 and S1235. Phosphothreonine is present on T1239. A Phosphoserine modification is found at S1241. Position 1253 is a phosphothreonine (T1253). The residue at position 1259 (S1259) is a Phosphoserine. T1284 carries the phosphothreonine modification. Phosphoserine occurs at positions 1290, 1301, and 1304. Y1462 is modified (phosphotyrosine). Residue T1465 is modified to Phosphothreonine. S1472 bears the Phosphoserine mark. Y1490 is subject to Phosphotyrosine. At S1493 the chain carries Phosphoserine. At T1499 the chain carries Phosphothreonine. S1512 carries the phosphoserine modification. Phosphothreonine is present on T1515. Phosphoserine occurs at positions 1540, 1552, 1572, 1712, and 1724. A phosphothreonine mark is found at T1728 and T1734. S1737 bears the Phosphoserine mark. A disordered region spans residues 1883-1913; sequence QAEEAEEQSNTNLSKFRKLQHELEEAEERAD.

It belongs to the TRAFAC class myosin-kinesin ATPase superfamily. Myosin family. As to quaternary structure, muscle myosin is a hexameric protein that consists of 2 heavy chain subunits (MHC), 2 alkali light chain subunits (MLC) and 2 regulatory light chain subunits (MLC-2). Interacts with GCSAM.

The protein localises to the cytoplasm. Its subcellular location is the myofibril. Its function is as follows. Myosins are actin-based motor molecules with ATPase activity essential for muscle contraction. The sequence is that of Myosin-2 (MYH2) from Equus caballus (Horse).